The chain runs to 292 residues: UPF0282 protein MJ1629 (292 aa).

The protein belongs to the UPF0282 family.

The polypeptide is UPF0282 protein MJ1629 (Methanocaldococcus jannaschii (strain ATCC 43067 / DSM 2661 / JAL-1 / JCM 10045 / NBRC 100440) (Methanococcus jannaschii)).